A 625-amino-acid polypeptide reads, in one-letter code: Chaperone protein HtpG (625 aa).

The tract at residues 1–341 (MEKKQFQAES…SEDLSLNISR (341 aa)) is a; substrate-binding. Residues 342 to 551 (EMLQHDRQLK…DGEITLEMEK (210 aa)) are b. Residues 552 to 625 (VLQAMPDNQN…FSQNMCKVMV (74 aa)) are c.

It belongs to the heat shock protein 90 family. As to quaternary structure, homodimer.

The protein resides in the cytoplasm. In terms of biological role, molecular chaperone. Has ATPase activity. This Shouchella clausii (strain KSM-K16) (Alkalihalobacillus clausii) protein is Chaperone protein HtpG.